The primary structure comprises 200 residues: A-type ATP synthase subunit E 3 (200 aa).

This sequence belongs to the V-ATPase E subunit family. Has multiple subunits with at least A(3), B(3), C, D, E, F, H, I and proteolipid K(x).

It localises to the cell membrane. Its function is as follows. Component of the A-type ATP synthase that produces ATP from ADP in the presence of a proton gradient across the membrane. This Methanospirillum hungatei JF-1 (strain ATCC 27890 / DSM 864 / NBRC 100397 / JF-1) protein is A-type ATP synthase subunit E 3.